A 158-amino-acid chain; its full sequence is Putative ribonucleoside-diphosphate reductase small chain B (158 aa).

The protein belongs to the ribonucleoside diphosphate reductase small chain family.

This chain is Putative ribonucleoside-diphosphate reductase small chain B (RNR2B), found in Arabidopsis thaliana (Mouse-ear cress).